Here is a 117-residue protein sequence, read N- to C-terminus: Protein OPG035 (117 aa).

The protein belongs to the poxviridae OPG035 family.

Functionally, bcl-2-like protein which contributes to virulence by preventing host NF-kappa-B activation in response to pro-inflammatory stimuli such as TNF-alpha or IL1B. The chain is Protein OPG035 (OPG035) from Bos taurus (Bovine).